A 490-amino-acid polypeptide reads, in one-letter code: Myocilin (490 aa).

The N-terminal stretch at 1–18 (MPAVQLLLLACLLGGVGA) is a signal peptide. The stretch at 51–170 (GQAMLAIQEL…QEVASLRRGQ (120 aa)) forms a coiled coil. The disordered stretch occupies residues 152-186 (LARRLESSSQEVASLRRGQCPQAHSSSQDVPSGSR). Residues 173-182 (QAHSSSQDVP) show a composition bias toward polar residues. Positions 230-489 (GCGELVWVGE…MVSYDIKLSR (260 aa)) constitute an Olfactomedin-like domain. A disulfide bridge links Cys-231 with Cys-419. Positions 366, 414, 415, 463, and 464 each coordinate Ca(2+). The short motif at 488 to 490 (SRL) is the Microbody targeting signal element.

Homodimer (via N-terminus). Can also form higher oligomers. Interacts with OLFM3, FN1, NRCAM, GLDN and NFASC. Interacts (via N-terminus) with MYL2. Interacts with SFRP1, FRZB, FZD7, FZD10, FZD1 and WIF1; regulates Wnt signaling. Interacts with SNTA1; regulates muscle hypertrophy. Interacts with ERBB2 and ERBB3; activates ERBB2-ERBB3 signaling pathway. Interacts with SNCG; affects its secretion and its aggregation. Post-translationally, palmitoylated. Undergoes a calcium-dependent proteolytic cleavage at Gln-212 by CAPN2 in the endoplasmic reticulum. The result is the production of two fragments, one of 35 kDa containing the C-terminal olfactomedin-like domain, and another of 20 kDa containing the N-terminal leucine zipper-like domain. In terms of processing, glycosylated. In terms of tissue distribution, the myocilin 35 kDa fragment is detected in iris and ciliary body.

It is found in the secreted. The protein resides in the golgi apparatus. It localises to the cytoplasmic vesicle. The protein localises to the extracellular space. Its subcellular location is the extracellular matrix. It is found in the extracellular exosome. The protein resides in the mitochondrion. It localises to the mitochondrion intermembrane space. The protein localises to the mitochondrion inner membrane. Its subcellular location is the mitochondrion outer membrane. It is found in the rough endoplasmic reticulum. The protein resides in the cell projection. It localises to the cilium. The protein localises to the endoplasmic reticulum. Its function is as follows. Secreted glycoprotein regulating the activation of different signaling pathways in adjacent cells to control different processes including cell adhesion, cell-matrix adhesion, cytoskeleton organization and cell migration. Promotes substrate adhesion, spreading and formation of focal contacts. Negatively regulates cell-matrix adhesion and stress fiber assembly through Rho protein signal transduction. Modulates the organization of actin cytoskeleton by stimulating the formation of stress fibers through interactions with components of Wnt signaling pathways. Promotes cell migration through activation of PTK2 and the downstream phosphatidylinositol 3-kinase signaling. Plays a role in bone formation and promotes osteoblast differentiation in a dose-dependent manner through mitogen-activated protein kinase signaling. Mediates myelination in the peripheral nervous system through ERBB2/ERBB3 signaling. Plays a role as a regulator of muscle hypertrophy through the components of dystrophin-associated protein complex. Involved in positive regulation of mitochondrial depolarization. Plays a role in neurite outgrowth. May participate in the obstruction of fluid outflow in the trabecular meshwork. The polypeptide is Myocilin (MYOC) (Bos taurus (Bovine)).